Here is a 406-residue protein sequence, read N- to C-terminus: Probable sphingosine-1-phosphate phosphatase (406 aa).

2 helical membrane-spanning segments follow: residues 66–86 and 92–112; these read ILGEEVFFILALPISTWCVAT and LCVVLALTIGGGNILKNTFTL. The tract at residues 107–115 is phosphatase sequence motif I; it reads KNTFTLPRP. The tract at residues 133-136 is phosphatase sequence motif II; sequence PSTH. His-136 functions as the Proton donor in the catalytic mechanism. 2 helical membrane passes run 138–158 and 162–182; these read ASAFGLTFYFLIYTYFLFPTI and FNISLLSMFFIVLFWSTSVMF. A phosphatase sequence motif III region spans residues 183-194; that stretch reads SRLYNGHHTPMD. Catalysis depends on His-190, which acts as the Nucleophile. A run of 5 helical transmembrane segments spans residues 193–213, 225–245, 254–274, 313–333, and 374–394; these read MDVIAGLIVAITSILATTYQL, TFLFGPMLYIAILSAILFFHP, AYPETGLVCGASLGSLISLWL, ILIGLVLVGIAKVFSKKFFFF, and LFVYTCVSFTIVSMPYLFYYL.

Belongs to the type 2 lipid phosphate phosphatase family.

The protein localises to the endoplasmic reticulum membrane. In terms of biological role, has enzymatic activity against both sphingosine 1 phosphate (S1P) and dihydro-S1P. Regulates intracellular and extracellular S1P levels. The sequence is that of Probable sphingosine-1-phosphate phosphatase (sppA) from Dictyostelium discoideum (Social amoeba).